The primary structure comprises 490 residues: Glutamyl-tRNA(Gln) amidotransferase subunit A (490 aa).

Catalysis depends on charge relay system residues Lys-78 and Ser-158. Ser-182 (acyl-ester intermediate) is an active-site residue.

The protein belongs to the amidase family. GatA subfamily. As to quaternary structure, heterotrimer of A, B and C subunits.

The enzyme catalyses L-glutamyl-tRNA(Gln) + L-glutamine + ATP + H2O = L-glutaminyl-tRNA(Gln) + L-glutamate + ADP + phosphate + H(+). Allows the formation of correctly charged Gln-tRNA(Gln) through the transamidation of misacylated Glu-tRNA(Gln) in organisms which lack glutaminyl-tRNA synthetase. The reaction takes place in the presence of glutamine and ATP through an activated gamma-phospho-Glu-tRNA(Gln). This is Glutamyl-tRNA(Gln) amidotransferase subunit A from Caulobacter sp. (strain K31).